A 264-amino-acid chain; its full sequence is Thymidylate synthase (264 aa).

Position 21 (Arg21) interacts with dUMP. His51 is a (6R)-5,10-methylene-5,6,7,8-tetrahydrofolate binding site. A dUMP-binding site is contributed by 126–127 (RR). Cys146 acts as the Nucleophile in catalysis. Residues 166-169 (RSAD), Asn177, and 207-209 (HLY) each bind dUMP. Asp169 is a binding site for (6R)-5,10-methylene-5,6,7,8-tetrahydrofolate. Ala263 is a (6R)-5,10-methylene-5,6,7,8-tetrahydrofolate binding site.

It belongs to the thymidylate synthase family. Bacterial-type ThyA subfamily. In terms of assembly, homodimer.

The protein localises to the cytoplasm. It catalyses the reaction dUMP + (6R)-5,10-methylene-5,6,7,8-tetrahydrofolate = 7,8-dihydrofolate + dTMP. It functions in the pathway pyrimidine metabolism; dTTP biosynthesis. Functionally, catalyzes the reductive methylation of 2'-deoxyuridine-5'-monophosphate (dUMP) to 2'-deoxythymidine-5'-monophosphate (dTMP) while utilizing 5,10-methylenetetrahydrofolate (mTHF) as the methyl donor and reductant in the reaction, yielding dihydrofolate (DHF) as a by-product. This enzymatic reaction provides an intracellular de novo source of dTMP, an essential precursor for DNA biosynthesis. This is Thymidylate synthase from Mesorhizobium japonicum (strain LMG 29417 / CECT 9101 / MAFF 303099) (Mesorhizobium loti (strain MAFF 303099)).